The primary structure comprises 99 residues: Integration host factor subunit alpha (99 aa).

Belongs to the bacterial histone-like protein family. Heterodimer of an alpha and a beta chain.

This protein is one of the two subunits of integration host factor, a specific DNA-binding protein that functions in genetic recombination as well as in transcriptional and translational control. The chain is Integration host factor subunit alpha from Psychrobacter cryohalolentis (strain ATCC BAA-1226 / DSM 17306 / VKM B-2378 / K5).